The primary structure comprises 316 residues: Pantothenate kinase (316 aa).

G95–S102 is an ATP binding site.

Belongs to the prokaryotic pantothenate kinase family.

It is found in the cytoplasm. The enzyme catalyses (R)-pantothenate + ATP = (R)-4'-phosphopantothenate + ADP + H(+). The protein operates within cofactor biosynthesis; coenzyme A biosynthesis; CoA from (R)-pantothenate: step 1/5. The protein is Pantothenate kinase of Shewanella sediminis (strain HAW-EB3).